An 82-amino-acid polypeptide reads, in one-letter code: Three-finger toxin MicTx3 (82 aa).

Residues 1–21 (MKTLLLTLVVVTIMCLDLGYT) form the signal peptide. Disulfide bonds link cysteine 24–cysteine 44, cysteine 38–cysteine 59, cysteine 63–cysteine 74, and cysteine 75–cysteine 80.

The protein belongs to the three-finger toxin family. Short-chain subfamily. Expressed by the venom gland.

It localises to the secreted. In terms of biological role, has been described to inhibit nicotinic acetylcholine receptor (nAChR) alpha-7/CHRNA7 subunits and to bind acetylcholine binding protein (AChBP) (Kd=29.5 nM). The chain is Three-finger toxin MicTx3 from Micrurus corallinus (Brazilian coral snake).